The primary structure comprises 37 residues: Large ribosomal subunit protein bL36c (37 aa).

This sequence belongs to the bacterial ribosomal protein bL36 family.

It localises to the plastid. Its subcellular location is the chloroplast. The protein is Large ribosomal subunit protein bL36c of Tupiella akineta (Green alga).